Consider the following 274-residue polypeptide: MLPLYWAVFTSPGPEIFRVGSVVIRWYGVLIAAAIVLGLQLSRHLATYRRIKPDDISDLAIWLVIGAIPCARLYYVLFQWEYYSQHLDQVATIWRGGIAIHGAILGGMLAALIFSRLKKVSFWQLADLVAPSLILGQAIGRWGNFFNSEAFGDPTDLPWKLFIPPARRPLAYRNSAYFHPTFLYESVWNLMVLGILLALFFKFPKAKKGTIFLVYAVTYSLGRLWIEGLRTDSLMLGPLRIAQVVSLIGIGIGMLGLTWLYLLKRSLPDTKQAS.

4 consecutive transmembrane segments (helical) span residues 19 to 39 (VGSV…VLGL), 59 to 79 (LAIW…VLFQ), 93 to 113 (IWRG…AALI), and 120 to 140 (VSFW…QAIG). R141 provides a ligand contact to a 1,2-diacyl-sn-glycero-3-phospho-(1'-sn-glycerol). A run of 3 helical transmembrane segments spans residues 181–201 (TFLY…ALFF), 209–229 (GTIF…IEGL), and 243–263 (QVVS…LYLL).

Belongs to the Lgt family.

It is found in the cell inner membrane. It carries out the reaction L-cysteinyl-[prolipoprotein] + a 1,2-diacyl-sn-glycero-3-phospho-(1'-sn-glycerol) = an S-1,2-diacyl-sn-glyceryl-L-cysteinyl-[prolipoprotein] + sn-glycerol 1-phosphate + H(+). It participates in protein modification; lipoprotein biosynthesis (diacylglyceryl transfer). Functionally, catalyzes the transfer of the diacylglyceryl group from phosphatidylglycerol to the sulfhydryl group of the N-terminal cysteine of a prolipoprotein, the first step in the formation of mature lipoproteins. The protein is Phosphatidylglycerol--prolipoprotein diacylglyceryl transferase of Acaryochloris marina (strain MBIC 11017).